Reading from the N-terminus, the 437-residue chain is ATP-dependent protease ATPase subunit HslU (437 aa).

ATP contacts are provided by residues Val-18, 60-65 (GCGKTE), Asp-250, Glu-315, and Arg-387.

This sequence belongs to the ClpX chaperone family. HslU subfamily. In terms of assembly, a double ring-shaped homohexamer of HslV is capped on each side by a ring-shaped HslU homohexamer. The assembly of the HslU/HslV complex is dependent on binding of ATP.

It localises to the cytoplasm. Its function is as follows. ATPase subunit of a proteasome-like degradation complex; this subunit has chaperone activity. The binding of ATP and its subsequent hydrolysis by HslU are essential for unfolding of protein substrates subsequently hydrolyzed by HslV. HslU recognizes the N-terminal part of its protein substrates and unfolds these before they are guided to HslV for hydrolysis. The sequence is that of ATP-dependent protease ATPase subunit HslU from Methylorubrum extorquens (strain PA1) (Methylobacterium extorquens).